Reading from the N-terminus, the 807-residue chain is MMAKNNKTTEAKMSKKRAASEESDVEEDEDKLLSVDGLIDAEASESDEDDDEYESAVEEKESSSDKEAQDDSDDDSDAELNKLLAEEEGDEEEDYDSSEFSDDTTSLTDRLSGVKLQTIVDPNIYSKYADGSDRIIKPEINPVYDSDDSDAETQNTIGNIPLSAYDEMPHIGYDINGKRIMRPAKGSALDQLLDSIELPEGWTGLLDKNSGSSLNLTKEELELISKIQRNEQTDDSINPYEPLIDWFTRHEEVMPLTAVPEPKRRFVPSKNEAKRVMKIVRAIREGRIIPPKKLKEMKEKEKTENYQYDLWGDSTETNDHVMHLRAPKLPPPTNEESYNPPEEYLLSPEEKEAWENTEYSERERNFVPQKYSALRKVPGYGESIRERFERSLDLYLAPRVRKNKLNIDPNSLIPELPSPKDLRPFPIRCSTIYAGHKGKVRTLSIDPSGLWLATGSDDGTVRVWEILTGREVYRTTLIDDEENPDDHIECIEWNPDANNGILAVAVGENIHLIVPPIFGYDIENNGKTKIEDGFGYDTFGTVKKSNLEVNENGDGDEDGENESAKNAVKKQVAQWNKPSQKQLEKDICITISCKKTVKKLSWHRKGDYFVTVQPDSGNTSVLIHQVSKHLTQSPFKKSKGIIMDAKFHPFKPQLFVCSQRYVRIYDLSQQILVKKLLPGARWLSKIDIHPRGDNLIASSFDKRVLWHDLDLASTPYKTLRYHEKAVRSVNFHKKLPLFSSAADDGTIHVFHATVYDDMMKNPMIVPLKKLTGHKVINSLGVLDAIWHPREAWLFSAGADNTARLWTT.

Residues 1–112 (MMAKNNKTTE…DTTSLTDRLS (112 aa)) form a disordered region. Acidic residues-rich tracts occupy residues 21–30 (EESDVEEDED) and 42–56 (EASE…YESA). Residue serine 23 is modified to Phosphoserine. Positions 57–69 (VEEKESSSDKEAQ) are enriched in basic and acidic residues. Serine 72 and serine 76 each carry phosphoserine. A compositionally biased stretch (acidic residues) spans 86 to 102 (EEEGDEEEDYDSSEFSD). A Glycyl lysine isopeptide (Lys-Gly) (interchain with G-Cter in ubiquitin) cross-link involves residue lysine 127. A phosphoserine mark is found at serine 146 and serine 149. A required for interaction with NOP7 region spans residues 265 to 383 (RFVPSKNEAK…LRKVPGYGES (119 aa)). The required for interaction with YTM1 stretch occupies residues 383 to 419 (SIRERFERSLDLYLAPRVRKNKLNIDPNSLIPELPSP). Serine 418 carries the post-translational modification Phosphoserine. WD repeat units follow at residues 435-474 (GHKG…EVYR), 483-523 (NPDD…YDIE), 592-634 (SCKK…TQSP), 637-675 (KSKG…LVKK), 678-717 (PGAR…TPYK), 721-760 (YHEK…DMMK), and 776-807 (INSL…LWTT).

This sequence belongs to the WD repeat BOP1/ERB1 family. As to quaternary structure, component of the NOP7 complex, composed of ERB1, NOP7 and YTM1. The complex is held together by ERB1, which interacts with NOP7 via its N-terminal domain and with YTM1 via a high-affinity interaction between the seven-bladed beta-propeller domains of the 2 proteins. The NOP7 complex associates with the 66S pre-ribosome.

The protein resides in the nucleus. It localises to the nucleolus. It is found in the nucleoplasm. Component of the NOP7 complex, which is required for maturation of the 25S and 5.8S ribosomal RNAs and formation of the 60S ribosome. In Saccharomyces cerevisiae (strain YJM789) (Baker's yeast), this protein is Ribosome biogenesis protein ERB1.